A 446-amino-acid polypeptide reads, in one-letter code: Probable glycine dehydrogenase (decarboxylating) subunit 1 (446 aa).

Belongs to the GcvP family. N-terminal subunit subfamily. The glycine cleavage system is composed of four proteins: P, T, L and H. In this organism, the P 'protein' is a heterodimer of two subunits.

The catalysed reaction is N(6)-[(R)-lipoyl]-L-lysyl-[glycine-cleavage complex H protein] + glycine + H(+) = N(6)-[(R)-S(8)-aminomethyldihydrolipoyl]-L-lysyl-[glycine-cleavage complex H protein] + CO2. In terms of biological role, the glycine cleavage system catalyzes the degradation of glycine. The P protein binds the alpha-amino group of glycine through its pyridoxal phosphate cofactor; CO(2) is released and the remaining methylamine moiety is then transferred to the lipoamide cofactor of the H protein. This Thermococcus onnurineus (strain NA1) protein is Probable glycine dehydrogenase (decarboxylating) subunit 1.